Reading from the N-terminus, the 99-residue chain is Sec-independent protein translocase protein TatA (99 aa).

The helical transmembrane segment at Met-1 to Phe-21 threads the bilayer. The tract at residues Ala-46–Ser-99 is disordered. Low complexity predominate over residues Ala-53–Pro-69. Polar residues predominate over residues Val-84–Ser-99.

Belongs to the TatA/E family. As to quaternary structure, the Tat system comprises two distinct complexes: a TatABC complex, containing multiple copies of TatA, TatB and TatC subunits, and a separate TatA complex, containing only TatA subunits. Substrates initially bind to the TatABC complex, which probably triggers association of the separate TatA complex to form the active translocon.

Its subcellular location is the cell membrane. Its function is as follows. Part of the twin-arginine translocation (Tat) system that transports large folded proteins containing a characteristic twin-arginine motif in their signal peptide across membranes. TatA could form the protein-conducting channel of the Tat system. This chain is Sec-independent protein translocase protein TatA, found in Streptomyces griseus subsp. griseus (strain JCM 4626 / CBS 651.72 / NBRC 13350 / KCC S-0626 / ISP 5235).